Here is a 552-residue protein sequence, read N- to C-terminus: Membrane protein insertase YidC (552 aa).

Helical transmembrane passes span 7–24, 364–384, 434–454, 473–493, and 508–528; these read VLWV…DNWQ, WGWA…PLSA, LPVV…LASV, PFFI…SLNP, and PIAF…YYVV.

It belongs to the OXA1/ALB3/YidC family. Type 1 subfamily. Interacts with the Sec translocase complex via SecD. Specifically interacts with transmembrane segments of nascent integral membrane proteins during membrane integration.

It localises to the cell inner membrane. In terms of biological role, required for the insertion and/or proper folding and/or complex formation of integral membrane proteins into the membrane. Involved in integration of membrane proteins that insert both dependently and independently of the Sec translocase complex, as well as at least some lipoproteins. Aids folding of multispanning membrane proteins. This is Membrane protein insertase YidC from Burkholderia cenocepacia (strain HI2424).